Consider the following 241-residue polypeptide: Octanoyltransferase (241 aa).

The BPL/LPL catalytic domain occupies 50–238; it reads KIAHEQVWLL…AFEQIFGPTI (189 aa). Substrate contacts are provided by residues 89 to 96, 169 to 171, and 182 to 184; these read RGGEFTYH, AIG, and GIS. The active-site Acyl-thioester intermediate is the Cys-200.

Belongs to the LipB family.

The protein resides in the cytoplasm. The enzyme catalyses octanoyl-[ACP] + L-lysyl-[protein] = N(6)-octanoyl-L-lysyl-[protein] + holo-[ACP] + H(+). It functions in the pathway protein modification; protein lipoylation via endogenous pathway; protein N(6)-(lipoyl)lysine from octanoyl-[acyl-carrier-protein]: step 1/2. Its function is as follows. Catalyzes the transfer of endogenously produced octanoic acid from octanoyl-acyl-carrier-protein onto the lipoyl domains of lipoate-dependent enzymes. Lipoyl-ACP can also act as a substrate although octanoyl-ACP is likely to be the physiological substrate. The polypeptide is Octanoyltransferase (Bartonella bacilliformis (strain ATCC 35685 / KC583 / Herrer 020/F12,63)).